The sequence spans 214 residues: Histidine biosynthesis bifunctional protein HisIE (214 aa).

Residues 1–114 are phosphoribosyl-AMP cyclohydrolase; it reads MDLSAVRFDE…LEGEKDLGFV (114 aa). Residues 115-214 are phosphoribosyl-ATP pyrophosphohydrolase; the sequence is VGQVYATIKE…RSPYDGSHGN (100 aa).

In the N-terminal section; belongs to the PRA-CH family. The protein in the C-terminal section; belongs to the PRA-PH family.

Its subcellular location is the cytoplasm. It carries out the reaction 1-(5-phospho-beta-D-ribosyl)-ATP + H2O = 1-(5-phospho-beta-D-ribosyl)-5'-AMP + diphosphate + H(+). It catalyses the reaction 1-(5-phospho-beta-D-ribosyl)-5'-AMP + H2O = 1-(5-phospho-beta-D-ribosyl)-5-[(5-phospho-beta-D-ribosylamino)methylideneamino]imidazole-4-carboxamide. The protein operates within amino-acid biosynthesis; L-histidine biosynthesis; L-histidine from 5-phospho-alpha-D-ribose 1-diphosphate: step 2/9. It functions in the pathway amino-acid biosynthesis; L-histidine biosynthesis; L-histidine from 5-phospho-alpha-D-ribose 1-diphosphate: step 3/9. The protein is Histidine biosynthesis bifunctional protein HisIE of Thermus thermophilus (strain ATCC BAA-163 / DSM 7039 / HB27).